The chain runs to 324 residues: tRNA pseudouridine synthase B (324 aa).

The Nucleophile role is filled by D49. The segment at 87-107 is disordered; it reads RSTDDLEGQPTKTSDKRPSRE.

Belongs to the pseudouridine synthase TruB family. Type 1 subfamily.

It catalyses the reaction uridine(55) in tRNA = pseudouridine(55) in tRNA. Its function is as follows. Responsible for synthesis of pseudouridine from uracil-55 in the psi GC loop of transfer RNAs. The sequence is that of tRNA pseudouridine synthase B from Brucella melitensis biotype 1 (strain ATCC 23456 / CCUG 17765 / NCTC 10094 / 16M).